Here is a 415-residue protein sequence, read N- to C-terminus: Queuine tRNA-ribosyltransferase accessory subunit 2 (415 aa).

Zn(2+)-binding residues include cysteine 351, cysteine 353, cysteine 356, and histidine 382.

Belongs to the queuine tRNA-ribosyltransferase family. QTRT2 subfamily. Heterodimer of a catalytic subunit QTRT1 and an accessory subunit QTRT2. It depends on Zn(2+) as a cofactor.

Its subcellular location is the cytoplasm. It is found in the mitochondrion outer membrane. Its function is as follows. Non-catalytic subunit of the queuine tRNA-ribosyltransferase (TGT) that catalyzes the base-exchange of a guanine (G) residue with queuine (Q) at position 34 (anticodon wobble position) in tRNAs with GU(N) anticodons (tRNA-Asp, -Asn, -His and -Tyr), resulting in the hypermodified nucleoside queuosine (7-(((4,5-cis-dihydroxy-2-cyclopenten-1-yl)amino)methyl)-7-deazaguanosine). In Pongo abelii (Sumatran orangutan), this protein is Queuine tRNA-ribosyltransferase accessory subunit 2.